The primary structure comprises 1009 residues: Type VII secretion system accessory factor EsaA (1009 aa).

6 helical membrane-spanning segments follow: residues isoleucine 7 to valine 27, isoleucine 822 to phenylalanine 842, alanine 869 to isoleucine 889, lysine 903 to leucine 923, serine 928 to leucine 948, and isoleucine 979 to phenylalanine 999.

Belongs to the EsaA family. In terms of assembly, homodimer. Interacts with EssB.

Its subcellular location is the cell membrane. Component of the type VII secretion system (Ess). Provides together with EssB and other components such as EssC and EssE a secretion platform across the cytoplasmic membrane in the host. In Staphylococcus aureus (strain MRSA252), this protein is Type VII secretion system accessory factor EsaA.